Reading from the N-terminus, the 126-residue chain is Glycine cleavage system H protein (126 aa).

One can recognise a Lipoyl-binding domain in the interval 23-104 (TLTVGITDHA…PYESWLFKIK (82 aa)). At Lys-64 the chain carries N6-lipoyllysine.

This sequence belongs to the GcvH family. The glycine cleavage system is composed of four proteins: P, T, L and H. Requires (R)-lipoate as cofactor.

In terms of biological role, the glycine cleavage system catalyzes the degradation of glycine. The H protein shuttles the methylamine group of glycine from the P protein to the T protein. This is Glycine cleavage system H protein from Paraburkholderia phytofirmans (strain DSM 17436 / LMG 22146 / PsJN) (Burkholderia phytofirmans).